A 388-amino-acid polypeptide reads, in one-letter code: Chorismate synthase (388 aa).

The NADP(+) site is built by Arg-39 and Arg-45. FMN is bound by residues 132-134, 251-252, Gly-296, 311-315, and Arg-337; these read RSS, NA, and KPIPT.

Belongs to the chorismate synthase family. As to quaternary structure, homotetramer. FMNH2 is required as a cofactor.

It catalyses the reaction 5-O-(1-carboxyvinyl)-3-phosphoshikimate = chorismate + phosphate. Its pathway is metabolic intermediate biosynthesis; chorismate biosynthesis; chorismate from D-erythrose 4-phosphate and phosphoenolpyruvate: step 7/7. Catalyzes the anti-1,4-elimination of the C-3 phosphate and the C-6 proR hydrogen from 5-enolpyruvylshikimate-3-phosphate (EPSP) to yield chorismate, which is the branch point compound that serves as the starting substrate for the three terminal pathways of aromatic amino acid biosynthesis. This reaction introduces a second double bond into the aromatic ring system. This is Chorismate synthase from Staphylococcus aureus (strain Mu50 / ATCC 700699).